A 154-amino-acid polypeptide reads, in one-letter code: Transcriptional repressor NrdR (154 aa).

Residues 3–34 (CPFCGANDTKVIDSRLVAEGEQVRRRRECLAC) fold into a zinc finger. Residues 49-139 (PRLIKQDGSR…VYRRFQDLNE (91 aa)) enclose the ATP-cone domain.

It belongs to the NrdR family. Zn(2+) serves as cofactor.

Its function is as follows. Negatively regulates transcription of bacterial ribonucleotide reductase nrd genes and operons by binding to NrdR-boxes. The chain is Transcriptional repressor NrdR from Pseudomonas syringae pv. tomato (strain ATCC BAA-871 / DC3000).